Consider the following 252-residue polypeptide: Short-chain dehydrogenase/reductase eriH (252 aa).

Residues isoleucine 16, aspartate 65, asparagine 92, lysine 125, tyrosine 158, lysine 162, valine 191, and threonine 193 each contribute to the NADP(+) site. The active-site Proton acceptor is the tyrosine 158. The active-site Proton donor is the tyrosine 158. Lysine 162 (lowers pKa of active site Tyr) is an active-site residue.

Belongs to the short-chain dehydrogenases/reductases (SDR) family.

The catalysed reaction is cyathadiol + reduced [NADPH--hemoprotein reductase] + O2 = cyathatriol + oxidized [NADPH--hemoprotein reductase] + H2O + H(+). It catalyses the reaction 11-O-acetylcyathatriol + A = 11-O-acetylcyathin A3 + AH2. It carries out the reaction cyathatriol + A = cyathin A3 + AH2. Its pathway is secondary metabolite biosynthesis. In terms of biological role, short-chain dehydrogenase/reductase; part of the gene cluster that mediates the biosynthesis of erinacines, cyathane-xylosides that show unique biological activities, including leishmanicidal activity, stimulating activity for nerve growth-factor synthesis, and agonistic activity toward the kappa opioid receptor. Within the pathway, eriH works with eriA to catalyze C-11 hydroxylation of cyathadiol to produce cyathatriol. EriH also catalyzes oxidation of 11-O-acetyl-cyathatriol into 1-O-acetylcyathin A3. In the absence of eriL and eriJ, the SDR eriH is able to convert cyathatriol to cyathin A3; this is likely a switching mechanism in the biosynthesis of cyathins (C-14 ketogroup)and erinacines (C-14 glycosylated group). The first step of the erinacines biosynthesis pathway is catalyzed by the geranylgeranyl diphosphate (GGPP) synthase eriE via conversion of farnesyl pyrophosphate and isopentyl pyrophosphate into geranylgeranyl pyrophosphate (GGPP). GGPP is then substrate of the diterpene cyclase eriG for the production of cyatha-3,12-diene. The cytochrome P450 monooxygenase eriI then hydroxylates cyatha-3,12-diene at C-14 of the seven-membered ring to produce erinacol, which is further hydroxylated at C-15 by the cytochrome P450 monooxygenase eriC to yield cyathadiol. The cytochrome P450 monooxygenase eriA then catalyzes C-11 hydroxylation in the presence of the short chain dehydrogenase/reductase (SDR) eriH, which leads to the production of cyathatriol. The acetyltransferase eriL converts cyathatriol into 11-O-acetyl-cyathatriol. The SDR eriH catalyzes further oxidation of 11-O-acetyl-cyathatriol into 1-O-acetylcyathin A3. Finally, the glycosyl transferase eriJ tranfers xylose from UDP-xylose onto C-14 of 11-O-acetyl-cyathatriol to form eracine Q. EriJ is also able to convert 11-O-acetyl-cyathatriol to eracine Q2 by using UDP-D-glucose as cosubstrate, but at a lower rate. This Hericium erinaceus (Lion's mane mushroom) protein is Short-chain dehydrogenase/reductase eriH.